We begin with the raw amino-acid sequence, 276 residues long: 2,3,4,5-tetrahydropyridine-2,6-dicarboxylate N-succinyltransferase (276 aa).

Residues Arg104 and Asp141 each contribute to the substrate site.

It belongs to the transferase hexapeptide repeat family. Homotrimer.

The protein resides in the cytoplasm. It catalyses the reaction (S)-2,3,4,5-tetrahydrodipicolinate + succinyl-CoA + H2O = (S)-2-succinylamino-6-oxoheptanedioate + CoA. The protein operates within amino-acid biosynthesis; L-lysine biosynthesis via DAP pathway; LL-2,6-diaminopimelate from (S)-tetrahydrodipicolinate (succinylase route): step 1/3. This chain is 2,3,4,5-tetrahydropyridine-2,6-dicarboxylate N-succinyltransferase, found in Pseudoalteromonas translucida (strain TAC 125).